A 296-amino-acid polypeptide reads, in one-letter code: Phosphoribosylaminoimidazole-succinocarboxamide synthase (296 aa).

The protein belongs to the SAICAR synthetase family.

The catalysed reaction is 5-amino-1-(5-phospho-D-ribosyl)imidazole-4-carboxylate + L-aspartate + ATP = (2S)-2-[5-amino-1-(5-phospho-beta-D-ribosyl)imidazole-4-carboxamido]succinate + ADP + phosphate + 2 H(+). The protein operates within purine metabolism; IMP biosynthesis via de novo pathway; 5-amino-1-(5-phospho-D-ribosyl)imidazole-4-carboxamide from 5-amino-1-(5-phospho-D-ribosyl)imidazole-4-carboxylate: step 1/2. The protein is Phosphoribosylaminoimidazole-succinocarboxamide synthase of Syntrophotalea carbinolica (strain DSM 2380 / NBRC 103641 / GraBd1) (Pelobacter carbinolicus).